The primary structure comprises 400 residues: MLNRVKLELKDPMDWNTMYQENEIYSGIHNMTNGLPSNSFLPTDVPTVTSSMTYMSNGLPGPVASIQGNLGSLGSMTQGMVGSLAPPPSTSAYPLGYCQGESEFQRDPRTYRRNYSHAKPPYSYISLITMAIQQAPNKMMTLNEIYQWIVDLFPYYRQNQQRWQNSIRHSLSFNDCFIKVPRSPEKPGKGSYWTLHPESGNMFENGCYLRRQKRFKCERSKSGEGERKGNKPGDETGGSLKETPVSFDDCSSSRSPQAAVNDGGRDSTGSSIHQATGGSPVGFSPTSEQAGTASQLMYPLGLSNDGYLGLVGEDVHLKHDPFSGRHPFSITQLMSSEQDQTYPNKMEMCPTTDHLVHYSNYSSDYHNLVSKNGLDMQTSSSSTDNGYYANMYSRPILSSL.

The segment at residues 119–213 (KPPYSYISLI…ENGCYLRRQK (95 aa)) is a DNA-binding region (fork-head). A compositionally biased stretch (basic and acidic residues) spans 218–234 (ERSKSGEGERKGNKPGD). The disordered stretch occupies residues 218–290 (ERSKSGEGER…VGFSPTSEQA (73 aa)). Composition is skewed to polar residues over residues 249–258 (DCSSSRSPQA) and 267–277 (STGSSIHQATG).

Primarily expressed in the dorsal blastopore lip (Spemann organizer) of early gastrulae. At later stages, expressed in the dorsal mesoderm and the neural floor plate. In the dorsal mesoderm, expressed in the notochord but not in the presomitic mesoderm. Also expressed in the mid-brain area.

The protein localises to the nucleus. In terms of biological role, transcriptional repressor involved in embryonic nervous system development. Plays a role in the induction and patterning of the anterior-posterior neural axis. Involved in the establishment of floor plate differentiation from neural plate cells during gastrulation. Binds the anf1 promoter sequence to restrict expression of anf1 to the anterior of the neural plate, thereby patterning the forebrain. Can bind to the HNF-3-alpha DNA target sequence. Cooperates with t/bra in a dose-dependent manner to specify dorsal mesoderm formation, including notochord. May be involved in the dorso-ventral patterning of the mesoderm. Binds to DNA via the target sequence 5'-[GA]TAAA[TC]A-3', with 5'-GTAAATA-3' being the preferred binding site. The polypeptide is Forkhead box protein A4-B (foxa4-b) (Xenopus laevis (African clawed frog)).